We begin with the raw amino-acid sequence, 207 residues long: Octanoyltransferase (207 aa).

In terms of domain architecture, BPL/LPL catalytic spans 27-203; that stretch reads ADTEDELWVV…HLETQFTPKA (177 aa). Residues 66 to 73, 133 to 135, and 146 to 148 each bind substrate; these read RGGQITYH, SLG, and GLA. Cys164 (acyl-thioester intermediate) is an active-site residue.

The protein belongs to the LipB family.

The protein resides in the cytoplasm. The catalysed reaction is octanoyl-[ACP] + L-lysyl-[protein] = N(6)-octanoyl-L-lysyl-[protein] + holo-[ACP] + H(+). Its pathway is protein modification; protein lipoylation via endogenous pathway; protein N(6)-(lipoyl)lysine from octanoyl-[acyl-carrier-protein]: step 1/2. Functionally, catalyzes the transfer of endogenously produced octanoic acid from octanoyl-acyl-carrier-protein onto the lipoyl domains of lipoate-dependent enzymes. Lipoyl-ACP can also act as a substrate although octanoyl-ACP is likely to be the physiological substrate. This is Octanoyltransferase from Neisseria meningitidis serogroup A / serotype 4A (strain DSM 15465 / Z2491).